A 440-amino-acid polypeptide reads, in one-letter code: Branched-chain amino acid permease BrnQ (440 aa).

12 consecutive transmembrane segments (helical) span residues 9-29 (YIII…NLIF), 46-66 (AGFL…FVFS), 80-100 (PVFG…FFAI), 121-141 (SPVS…LLSL), 149-169 (IVGK…VAVA), 196-216 (GYLT…VNAL), 227-247 (LIVV…VMYT), 284-304 (ILLG…LITA), 321-341 (IAVV…TQLI), 348-368 (LLTM…HSVF), 378-398 (SLLF…GIKI), and 414-434 (IGLG…ILSI).

Belongs to the branched chain amino acid transporter family.

It is found in the cell membrane. In terms of biological role, branched-chain amino acid transport system which is involved in the uptake of isoleucine and valine. Probably does not transport leucine. Together with BcaP and BraB, plays an important role in the activation of CodY, a branched-chain amino acid-responsive transcriptional regulator that controls the expression of several dozen transcription units in B.subtilis. This chain is Branched-chain amino acid permease BrnQ, found in Bacillus subtilis (strain 168).